The sequence spans 321 residues: Serine/threonine-protein phosphatase 4 catalytic subunit 2 (321 aa).

Residues aspartate 64, histidine 66, aspartate 92, and asparagine 124 each coordinate Mn(2+). The Proton donor role is filled by histidine 125. Residues histidine 174 and histidine 249 each contribute to the Mn(2+) site.

This sequence belongs to the PPP phosphatase family. PP-4 (PP-X) subfamily. In terms of assembly, serine/threonine-protein phosphatase 4 (PP4) occurs in different assemblies of the catalytic and one or more regulatory subunits. Mn(2+) serves as cofactor.

The enzyme catalyses O-phospho-L-seryl-[protein] + H2O = L-seryl-[protein] + phosphate. It catalyses the reaction O-phospho-L-threonyl-[protein] + H2O = L-threonyl-[protein] + phosphate. In terms of biological role, protein phosphatase which seems to be involved in larval development but not essential for embryogenesis. The protein is Serine/threonine-protein phosphatase 4 catalytic subunit 2 of Caenorhabditis elegans.